Here is a 158-residue protein sequence, read N- to C-terminus: 6,7-dimethyl-8-ribityllumazine synthase (158 aa).

5-amino-6-(D-ribitylamino)uracil-binding positions include phenylalanine 22, 56–58 (ALE), and 80–82 (VVI). A (2S)-2-hydroxy-3-oxobutyl phosphate-binding site is contributed by 85–86 (ET). The Proton donor role is filled by histidine 88. Asparagine 113 serves as a coordination point for 5-amino-6-(D-ribitylamino)uracil. Residue arginine 127 coordinates (2S)-2-hydroxy-3-oxobutyl phosphate.

Belongs to the DMRL synthase family.

It carries out the reaction (2S)-2-hydroxy-3-oxobutyl phosphate + 5-amino-6-(D-ribitylamino)uracil = 6,7-dimethyl-8-(1-D-ribityl)lumazine + phosphate + 2 H2O + H(+). The protein operates within cofactor biosynthesis; riboflavin biosynthesis; riboflavin from 2-hydroxy-3-oxobutyl phosphate and 5-amino-6-(D-ribitylamino)uracil: step 1/2. Functionally, catalyzes the formation of 6,7-dimethyl-8-ribityllumazine by condensation of 5-amino-6-(D-ribitylamino)uracil with 3,4-dihydroxy-2-butanone 4-phosphate. This is the penultimate step in the biosynthesis of riboflavin. The chain is 6,7-dimethyl-8-ribityllumazine synthase from Neisseria meningitidis serogroup C / serotype 2a (strain ATCC 700532 / DSM 15464 / FAM18).